The following is a 347-amino-acid chain: S-adenosylmethionine:tRNA ribosyltransferase-isomerase (347 aa).

It belongs to the QueA family. As to quaternary structure, monomer.

The protein localises to the cytoplasm. The enzyme catalyses 7-aminomethyl-7-carbaguanosine(34) in tRNA + S-adenosyl-L-methionine = epoxyqueuosine(34) in tRNA + adenine + L-methionine + 2 H(+). Its pathway is tRNA modification; tRNA-queuosine biosynthesis. Functionally, transfers and isomerizes the ribose moiety from AdoMet to the 7-aminomethyl group of 7-deazaguanine (preQ1-tRNA) to give epoxyqueuosine (oQ-tRNA). This is S-adenosylmethionine:tRNA ribosyltransferase-isomerase from Pseudomonas aeruginosa (strain ATCC 15692 / DSM 22644 / CIP 104116 / JCM 14847 / LMG 12228 / 1C / PRS 101 / PAO1).